The sequence spans 742 residues: Synaptic vesicle glycoprotein 2A (742 aa).

An interaction with SYT1 region spans residues 1-57 (MEEGFRDRAAFIRGAKDIAKEVKKHATKKVVKGLDRVQDEYSRRSYSRFEEEDDDDD). The Cytoplasmic portion of the chain corresponds to 1-169 (MEEGFRDRAA…GHGRFQWTLY (169 aa)). Residues 32-49 (KGLDRVQDEYSRRSYSRF) are compositionally biased toward basic and acidic residues. The tract at residues 32-144 (KGLDRVQDEY…GRGEAQRRKE (113 aa)) is disordered. 2 positions are modified to phosphoserine: Ser-80 and Ser-81. Thr-84 carries the post-translational modification Phosphothreonine. Residues 122–137 (VRGGLGDGEGPPGGRG) are compositionally biased toward gly residues. The chain crosses the membrane as a helical span at residues 170 to 190 (FVLGLALMADGVEVFVVGFVL). At 191 to 205 (PSAEKDMCLSDSNKG) the chain is on the extracellular side. A helical membrane pass occupies residues 206-226 (MLGLIVYLGMMVGAFLWGGLA). Residues 227 to 233 (DRLGRRQ) are Cytoplasmic-facing. Residues 234-254 (CLLISLSVNSVFAFFSSFVQG) traverse the membrane as a helical segment. Residues 255 to 262 (YGTFLFCR) are Extracellular-facing. Residues 263–283 (LLSGVGIGGSIPIVFSYFSEF) form a helical membrane-spanning segment. Residues 284 to 294 (LAQEKRGEHLS) lie on the Cytoplasmic side of the membrane. A helical transmembrane segment spans residues 295 to 315 (WLCMFWMIGGVYAAAMAWAII). Residues 316–334 (PHYGWSFQMGSAYQFHSWR) are Extracellular-facing. The helical transmembrane segment at 335–355 (VFVLVCAFPSVFAIGALTTQP) threads the bilayer. Topologically, residues 356 to 447 (ESPRFFLENG…CFGPEYRRIT (92 aa)) are cytoplasmic. A Phosphoserine modification is found at Ser-393. A helical transmembrane segment spans residues 448 to 468 (LMMMGVWFTMSFSYYGLTVWF). Over 469 to 598 (PDMIRHLQAV…GTGEGAYMVY (130 aa)) the chain is Extracellular. Tyr-480 is subject to Phosphotyrosine. Asn-498, Asn-548, and Asn-573 each carry an N-linked (GlcNAc...) asparagine glycan. The chain crosses the membrane as a helical span at residues 599–619 (FVSFLGTLAVLPGNIVSALLM). The Cytoplasmic portion of the chain corresponds to 620–626 (DKIGRLR). Residues 627 to 647 (MLAGSSVMSCVSCFFLSFGNS) traverse the membrane as a helical segment. Topologically, residues 648–651 (ESAM) are extracellular. A helical transmembrane segment spans residues 652-672 (IALLCLFGGVSIASWNALDVL). The Cytoplasmic portion of the chain corresponds to 673-685 (TVELYPSDKRTTA). Residues 686-708 (FGFLNALCKLAAVLGISIFTSFV) form a helical membrane-spanning segment. The Extracellular segment spans residues 709 to 712 (GITK). A helical transmembrane segment spans residues 713–731 (AAPILFASAALALGSSLAL). Residues 732–742 (KLPETRGQVLQ) lie on the Cytoplasmic side of the membrane.

It belongs to the major facilitator superfamily. As to quaternary structure, interacts with SYT1/synaptotagmin-1 in a calcium-dependent manner. Binds the adapter protein complex AP-2. Post-translationally, phosphorylation by CK1 of the N-terminal cytoplasmic domain regulates interaction with SYT1. In terms of processing, N-glycosylated.

Its subcellular location is the presynapse. The protein resides in the cytoplasmic vesicle. It is found in the secretory vesicle. The protein localises to the synaptic vesicle membrane. Functionally, plays a role in the control of regulated secretion in neural and endocrine cells, enhancing selectively low-frequency neurotransmission. Positively regulates vesicle fusion by maintaining the readily releasable pool of secretory vesicles. This Bos taurus (Bovine) protein is Synaptic vesicle glycoprotein 2A (SV2A).